We begin with the raw amino-acid sequence, 330 residues long: Cytosolic iron-sulfur protein assembly protein 1 (330 aa).

7 WD repeats span residues 12–53, 56–95, 105–144, 151–190, 195–236, 248–286, and 292–330; these read LYKE…DVLD, AHKK…DRTF, GHEN…EEYE, EHSQ…WECV, GHEG…EDDQ, VHKR…WKVF, and CHGV…EKAA.

Belongs to the WD repeat CIA1 family. As to quaternary structure, interacts with NAR1.

It is found in the cytoplasm. Its subcellular location is the nucleus. Essential component of the cytosolic iron-sulfur (Fe/S) protein assembly machinery. Required for the maturation of extramitochondrial Fe/S proteins. The sequence is that of Cytosolic iron-sulfur protein assembly protein 1 from Saccharomyces cerevisiae (strain ATCC 204508 / S288c) (Baker's yeast).